The following is a 126-amino-acid chain: MAGSKCLALIAHDQKKDDMAAFARANQELLSRWKIVATGTTGGRVLDAAPDLDVTRLKSGPLGGDQQIGALISTGEVDALIFFVDPLTPMPHDVDVKALMRLAIVYDIPMALNHATAIKLLPTLEA.

One can recognise an MGS-like domain in the interval 1-126; it reads MAGSKCLALI…AIKLLPTLEA (126 aa). Residues His-12, Lys-16, 38-41, and 59-60 each bind substrate; these read TGTT and SG. Asp-65 serves as the catalytic Proton donor/acceptor. Position 92 (His-92) interacts with substrate.

Belongs to the methylglyoxal synthase family.

It catalyses the reaction dihydroxyacetone phosphate = methylglyoxal + phosphate. Catalyzes the formation of methylglyoxal from dihydroxyacetone phosphate. The chain is Methylglyoxal synthase from Rhizobium etli (strain ATCC 51251 / DSM 11541 / JCM 21823 / NBRC 15573 / CFN 42).